A 70-amino-acid chain; its full sequence is U-actitoxin-Avd11a (70 aa).

Residues 36 to 70 enclose the ShKT domain; the sequence is CNDYKSSSYCRSVGSRNECGIHKYRMYCRKTCGSC. 3 cysteine pairs are disulfide-bonded: Cys-36–Cys-70, Cys-45–Cys-63, and Cys-54–Cys-67. A crucial for binding to potassium channels region spans residues 58 to 59; that stretch reads KY.

This sequence belongs to the sea anemone type 1 potassium channel toxin family. Type 1b subfamily.

The protein resides in the secreted. Its subcellular location is the nematocyst. Its function is as follows. Inhibits voltage-gated potassium channels (Kv1/KCNA). This chain is U-actitoxin-Avd11a, found in Anemonia viridis (Snakelocks anemone).